Reading from the N-terminus, the 339-residue chain is Lipopolysaccharide 1,2-glucosyltransferase (339 aa).

Residues 35-40 (GIDENY) and 132-133 (DA) each bind UDP. Residues Asp-132 and Asp-134 each contribute to the Mg(2+) site. Short sequence motifs (DXD) lie at residues 132–134 (DAD) and 219–221 (DQD). Residue His-268 coordinates Mg(2+). 268–274 (HYTGITK) contributes to the UDP binding site.

This sequence belongs to the glycosyltransferase 8 family. Requires Mg(2+) as cofactor.

It localises to the cell inner membrane. It carries out the reaction UDP-glucose + [lipopolysaccharide] = UDP + D-glucosyl-[lipopolysaccharide].. It participates in bacterial outer membrane biogenesis; LPS core biosynthesis. Functionally, glucosyltransferase involved in the biosynthesis of the core oligosaccharide region of lipopolysaccharide (LPS). Catalyzes the addition of a glucose (glucose II) to the outer-core galactose I. Has a marked preference for its specific donor substrate, but it appears to have a relaxed specificity for alternate LPS acceptor residues, providing the overall size of the acceptor is conserved. This is Lipopolysaccharide 1,2-glucosyltransferase from Escherichia coli.